The chain runs to 471 residues: Nuclear receptor subfamily 0 group B member 1 (471 aa).

3 repeat units span residues Met-1 to Cys-67, Phe-68 to Cys-134, and Phe-135 to Cys-201. Positions Met-1–Val-253 are 4 X 67 AA tandem repeats. 3 consecutive short sequence motifs (LXXLL motif) follow at residues Leu-13–Leu-17, Leu-80–Leu-84, and Leu-147–Leu-151. One copy of the 4; truncated repeat lies at Phe-202–Val-253. Residues Gln-210–Lys-470 form the NR LBD domain. The AF-2 motif motif lies at Met-462–Leu-467.

Belongs to the nuclear hormone receptor family. NR0 subfamily. Homodimer. Interacts with NR5A1, NR5A2, NR0B2 and with COPS2. Interacts with ESRRB; represses ESRRB activity at the GATA6 promoter.

It is found in the nucleus. It localises to the cytoplasm. In terms of biological role, nuclear receptor that lacks a DNA-binding domain and acts as a corepressor that inhibits the transcriptional activity of other nuclear receptors through heterodimeric interactions. Component of a cascade required for the development of the hypothalamic-pituitary-adrenal-gonadal axis. May also have a role in the development of the embryo and in the maintenance of embryonic stem cell pluripotency. The sequence is that of Nuclear receptor subfamily 0 group B member 1 (NR0B1) from Sus scrofa (Pig).